Consider the following 223-residue polypeptide: Urease accessory protein UreF (223 aa).

Belongs to the UreF family. In terms of assembly, ureD, UreF and UreG form a complex that acts as a GTP-hydrolysis-dependent molecular chaperone, activating the urease apoprotein by helping to assemble the nickel containing metallocenter of UreC. The UreE protein probably delivers the nickel.

The protein localises to the cytoplasm. Functionally, required for maturation of urease via the functional incorporation of the urease nickel metallocenter. This chain is Urease accessory protein UreF, found in Rhizobium etli (strain CIAT 652).